A 323-amino-acid chain; its full sequence is tRNA U34 carboxymethyltransferase (323 aa).

Residues Lys91, Trp105, Lys110, Gly130, 152 to 154 (DPT), 181 to 182 (IE), Met196, Tyr200, and Arg315 each bind carboxy-S-adenosyl-L-methionine.

This sequence belongs to the class I-like SAM-binding methyltransferase superfamily. CmoB family. In terms of assembly, homotetramer.

It carries out the reaction carboxy-S-adenosyl-L-methionine + 5-hydroxyuridine(34) in tRNA = 5-carboxymethoxyuridine(34) in tRNA + S-adenosyl-L-homocysteine + H(+). Catalyzes carboxymethyl transfer from carboxy-S-adenosyl-L-methionine (Cx-SAM) to 5-hydroxyuridine (ho5U) to form 5-carboxymethoxyuridine (cmo5U) at position 34 in tRNAs. This is tRNA U34 carboxymethyltransferase from Escherichia coli O139:H28 (strain E24377A / ETEC).